Consider the following 194-residue polypeptide: Peptidyl-tRNA hydrolase (194 aa).

Y17 lines the tRNA pocket. Catalysis depends on H22, which acts as the Proton acceptor. 3 residues coordinate tRNA: F68, N70, and N116.

Belongs to the PTH family. In terms of assembly, monomer.

It is found in the cytoplasm. It carries out the reaction an N-acyl-L-alpha-aminoacyl-tRNA + H2O = an N-acyl-L-amino acid + a tRNA + H(+). Its function is as follows. Hydrolyzes ribosome-free peptidyl-tRNAs (with 1 or more amino acids incorporated), which drop off the ribosome during protein synthesis, or as a result of ribosome stalling. Catalyzes the release of premature peptidyl moieties from peptidyl-tRNA molecules trapped in stalled 50S ribosomal subunits, and thus maintains levels of free tRNAs and 50S ribosomes. The protein is Peptidyl-tRNA hydrolase of Histophilus somni (strain 2336) (Haemophilus somnus).